The chain runs to 338 residues: Large ribosomal subunit protein uL3 (338 aa).

Disordered regions lie at residues 230 to 256 and 315 to 338; these read HRKGHRRTGTIGPQAPALMFTQPRPGQ and PARPPRRAPPTTEPQVVWVSSQQP.

Belongs to the universal ribosomal protein uL3 family. As to quaternary structure, part of the 50S ribosomal subunit. Forms a cluster with proteins L14 and L24e.

Functionally, one of the primary rRNA binding proteins, it binds directly near the 3'-end of the 23S rRNA, where it nucleates assembly of the 50S subunit. This Pyrobaculum arsenaticum (strain DSM 13514 / JCM 11321 / PZ6) protein is Large ribosomal subunit protein uL3.